We begin with the raw amino-acid sequence, 209 residues long: Ribosomal RNA large subunit methyltransferase E (209 aa).

The S-adenosyl-L-methionine site is built by glycine 63, tryptophan 65, aspartate 83, aspartate 99, and aspartate 124. Lysine 164 serves as the catalytic Proton acceptor.

Belongs to the class I-like SAM-binding methyltransferase superfamily. RNA methyltransferase RlmE family.

The protein localises to the cytoplasm. The catalysed reaction is uridine(2552) in 23S rRNA + S-adenosyl-L-methionine = 2'-O-methyluridine(2552) in 23S rRNA + S-adenosyl-L-homocysteine + H(+). In terms of biological role, specifically methylates the uridine in position 2552 of 23S rRNA at the 2'-O position of the ribose in the fully assembled 50S ribosomal subunit. This chain is Ribosomal RNA large subunit methyltransferase E, found in Cronobacter sakazakii (strain ATCC BAA-894) (Enterobacter sakazakii).